Here is a 695-residue protein sequence, read N- to C-terminus: DNA topoisomerase 4 subunit B (695 aa).

The interval 1–53 (MSSSDKIPSLFGDDDALAPVPAAPFKASVEPRVEPTPRPIPPPPPSKTASAPG) is disordered. Residues 36–46 (TPRPIPPPPPS) are compositionally biased toward pro residues. Residues Tyr55, Asn95, Asp122, 164-170 (GLHGVGA), and Lys397 each bind ATP. The region spanning 477-591 (AELFIVEGDS…GGHLFLALPP (115 aa)) is the Toprim domain. Mg(2+) is bound by residues Glu483, Asp556, and Asp558.

Belongs to the type II topoisomerase family. ParE type 1 subfamily. In terms of assembly, heterotetramer composed of ParC and ParE. The cofactor is Mg(2+). It depends on Mn(2+) as a cofactor. Requires Ca(2+) as cofactor.

It catalyses the reaction ATP-dependent breakage, passage and rejoining of double-stranded DNA.. In terms of biological role, topoisomerase IV is essential for chromosome segregation. It relaxes supercoiled DNA. Performs the decatenation events required during the replication of a circular DNA molecule. This is DNA topoisomerase 4 subunit B from Caulobacter vibrioides (strain ATCC 19089 / CIP 103742 / CB 15) (Caulobacter crescentus).